A 202-amino-acid chain; its full sequence is MASSLILASASPRRLALLARIGIKPELVLPADIDETPKKGELPLEYVRRMATEKAEWVASRHSECHILAADTVVAAGRRILPKAEDEKQATSYLKLLSGRRHRVLTAVAMQKDDAPTTVKVSSNIVTFKSLSPREIEDYVASGEWRGKAGGYAIQGYAESFIRFLAGSHSSVMGLPLYETRHLLMNAGWPISASSSFQEEYA.

The Proton acceptor role is filled by Asp71.

The protein belongs to the Maf family. YhdE subfamily. A divalent metal cation is required as a cofactor.

It is found in the cytoplasm. It carries out the reaction dTTP + H2O = dTMP + diphosphate + H(+). It catalyses the reaction UTP + H2O = UMP + diphosphate + H(+). Nucleoside triphosphate pyrophosphatase that hydrolyzes dTTP and UTP. May have a dual role in cell division arrest and in preventing the incorporation of modified nucleotides into cellular nucleic acids. This Zymomonas mobilis subsp. mobilis (strain ATCC 31821 / ZM4 / CP4) protein is dTTP/UTP pyrophosphatase.